A 360-amino-acid chain; its full sequence is A-type ATP synthase subunit C (360 aa).

Positions methionine 1–threonine 23 are disordered. Residues glycine 9 to glycine 22 show a composition bias toward basic residues.

The protein belongs to the V-ATPase V0D/AC39 subunit family. Has multiple subunits with at least A(3), B(3), C, D, E, F, H, I and proteolipid K(x).

It localises to the cell membrane. Its function is as follows. Component of the A-type ATP synthase that produces ATP from ADP in the presence of a proton gradient across the membrane. The chain is A-type ATP synthase subunit C from Methanosarcina acetivorans (strain ATCC 35395 / DSM 2834 / JCM 12185 / C2A).